The chain runs to 509 residues: ATP synthase subunit alpha, mitochondrial (509 aa).

Residue 171-178 (GDRQTGKT) participates in ATP binding.

Belongs to the ATPase alpha/beta chains family. As to quaternary structure, F-type ATPases have 2 components, CF(1) - the catalytic core - and CF(0) - the membrane proton channel. CF(1) has five subunits: alpha(3), beta(3), gamma(1), delta(1), epsilon(1). CF(0) has three main subunits: a, b and c.

It localises to the mitochondrion. The protein localises to the mitochondrion inner membrane. Its function is as follows. Mitochondrial membrane ATP synthase (F(1)F(0) ATP synthase or Complex V) produces ATP from ADP in the presence of a proton gradient across the membrane which is generated by electron transport complexes of the respiratory chain. F-type ATPases consist of two structural domains, F(1) - containing the extramembraneous catalytic core, and F(0) - containing the membrane proton channel, linked together by a central stalk and a peripheral stalk. During catalysis, ATP synthesis in the catalytic domain of F(1) is coupled via a rotary mechanism of the central stalk subunits to proton translocation. Subunits alpha and beta form the catalytic core in F(1). Rotation of the central stalk against the surrounding alpha(3)beta(3) subunits leads to hydrolysis of ATP in three separate catalytic sites on the beta subunits. Subunit alpha does not bear the catalytic high-affinity ATP-binding sites. The protein is ATP synthase subunit alpha, mitochondrial (ATPA) of Nicotiana plumbaginifolia (Leadwort-leaved tobacco).